Here is a 311-residue protein sequence, read N- to C-terminus: Methionyl-tRNA formyltransferase (311 aa).

109–112 (SKLP) serves as a coordination point for (6S)-5,6,7,8-tetrahydrofolate.

This sequence belongs to the Fmt family.

The catalysed reaction is L-methionyl-tRNA(fMet) + (6R)-10-formyltetrahydrofolate = N-formyl-L-methionyl-tRNA(fMet) + (6S)-5,6,7,8-tetrahydrofolate + H(+). Attaches a formyl group to the free amino group of methionyl-tRNA(fMet). The formyl group appears to play a dual role in the initiator identity of N-formylmethionyl-tRNA by promoting its recognition by IF2 and preventing the misappropriation of this tRNA by the elongation apparatus. The polypeptide is Methionyl-tRNA formyltransferase (fmt) (Mycoplasma pneumoniae (strain ATCC 29342 / M129 / Subtype 1) (Mycoplasmoides pneumoniae)).